Here is a 443-residue protein sequence, read N- to C-terminus: Trigger factor (443 aa).

Positions 161–246 constitute a PPIase FKBP-type domain; the sequence is GDKVVIDFQG…IKKIMEGKLP (86 aa).

This sequence belongs to the FKBP-type PPIase family. Tig subfamily.

It localises to the cytoplasm. The enzyme catalyses [protein]-peptidylproline (omega=180) = [protein]-peptidylproline (omega=0). Its function is as follows. Involved in protein export. Acts as a chaperone by maintaining the newly synthesized protein in an open conformation. Functions as a peptidyl-prolyl cis-trans isomerase. This Legionella pneumophila subsp. pneumophila (strain Philadelphia 1 / ATCC 33152 / DSM 7513) protein is Trigger factor.